A 249-amino-acid polypeptide reads, in one-letter code: 1-(5-phosphoribosyl)-5-[(5-phosphoribosylamino)methylideneamino] imidazole-4-carboxamide isomerase (249 aa).

Asp-11 functions as the Proton acceptor in the catalytic mechanism. Catalysis depends on Asp-133, which acts as the Proton donor.

Belongs to the HisA/HisF family.

The protein resides in the cytoplasm. The catalysed reaction is 1-(5-phospho-beta-D-ribosyl)-5-[(5-phospho-beta-D-ribosylamino)methylideneamino]imidazole-4-carboxamide = 5-[(5-phospho-1-deoxy-D-ribulos-1-ylimino)methylamino]-1-(5-phospho-beta-D-ribosyl)imidazole-4-carboxamide. Its pathway is amino-acid biosynthesis; L-histidine biosynthesis; L-histidine from 5-phospho-alpha-D-ribose 1-diphosphate: step 4/9. The protein is 1-(5-phosphoribosyl)-5-[(5-phosphoribosylamino)methylideneamino] imidazole-4-carboxamide isomerase of Haemophilus influenzae (strain 86-028NP).